The primary structure comprises 314 residues: Olfactory receptor 5F1 (314 aa).

Topologically, residues 1–25 (MTRKNYTSLTEFVLLGLADTLELQI) are extracellular. N-linked (GlcNAc...) asparagine glycosylation is present at asparagine 5. A helical transmembrane segment spans residues 26 to 46 (ILFLFFLVIYTLTVLGNLGMI). The Cytoplasmic segment spans residues 47-54 (LLIRIDSQ). A helical membrane pass occupies residues 55–75 (LHTPMYFFLANLSFVDVCNST). Over 76-99 (TITPKMLADLLSEKKTISFAGCFL) the chain is Extracellular. A disulfide bridge connects residues cysteine 97 and cysteine 189. Residues 100–120 (QMYFFISLATTECILFGLMAY) form a helical membrane-spanning segment. At 121–139 (DRYAAICRPLLYSLIMSRT) the chain is on the cytoplasmic side. Residues 140–160 (VYLKMAAGAFAAGLLNFMVNT) form a helical membrane-spanning segment. Residues 161-196 (SHVSSLSFCDSNVIHHFFCDSPPLFKLSCSDTILKE) are Extracellular-facing. A helical transmembrane segment spans residues 197–217 (SISSILAGVNIVGTLLVILSS). Residues 218–237 (YSYVLFSIFSMHSGEGRHRA) lie on the Cytoplasmic side of the membrane. Residues 238-258 (FSTCASHLTAIILFYATCIYT) traverse the membrane as a helical segment. At 259-271 (YLRPSSSYSLNQD) the chain is on the extracellular side. Residues 272–292 (KVASVFYTVVIPMLNPLIYSL) form a helical membrane-spanning segment. At 293 to 314 (RSKEVKKALANVISRKRTSSFL) the chain is on the cytoplasmic side.

This sequence belongs to the G-protein coupled receptor 1 family.

Its subcellular location is the cell membrane. In terms of biological role, odorant receptor. The polypeptide is Olfactory receptor 5F1 (OR5F1) (Homo sapiens (Human)).